A 291-amino-acid chain; its full sequence is Phycobilisome 32.1 kDa linker polypeptide, phycocyanin-associated, rod 1 (291 aa).

Residues 2–179 (AITTAASRLG…LYRGYANSDR (178 aa)) enclose the PBS-linker domain. Positions 236-288 (SKLFRVEITAISAPGYPKVRRSNKAVIVPFEQLNQTLQQINRLGGKVASITPA) constitute a CpcD-like domain.

It belongs to the phycobilisome linker protein family. Part of 2 PBS rod complexes, the conventional CpcG-PBS rod and a photosystem I-specific CpcL-PBS rod, both of which include ferredoxin--NADP reductase (petH). CpcG-PBS has on average 3 stacked phycocyanin hexamers (PC, CpcA and CpcB). Linker CpcG connects the PC stack to the thylakoid, the hexamers are linked by 1 copy of CpcC1, 1 copy of CpcC2 and the stack is terminated by a single copy of CpcD. The CpcL-PBS has on average 5 stacked phycocyanin hexamers (PC, CpcA and CpcB). Linker CpcL connects the PC stack to the thylakoid, the hexamers are linked by 1 copy of CpcC1, 3 copies of CpcC2 and the stack is terminated by a single copy of CpcD.

It localises to the cellular thylakoid membrane. Its function is as follows. Rod linker protein, connecting hexameric phycocyanin (PC, made by cpcA and cpcB) rods in the phycobilisome (PBS). PC is the major phycobiliprotein in PBS rods. Linker polypeptides determine the state of aggregation and the location of the disk-shaped phycobiliprotein units within the phycobilisome and modulate their spectroscopic properties in order to mediate a directed and optimal energy transfer. This is Phycobilisome 32.1 kDa linker polypeptide, phycocyanin-associated, rod 1 (cpcC1) from Synechocystis sp. (strain ATCC 27184 / PCC 6803 / Kazusa).